Consider the following 448-residue polypeptide: Methylenetetrahydrofolate--tRNA-(uracil-5-)-methyltransferase TrmFO (448 aa).

13 to 18 provides a ligand contact to FAD; the sequence is GAGLAG.

Belongs to the MnmG family. TrmFO subfamily. FAD serves as cofactor.

The protein localises to the cytoplasm. It catalyses the reaction uridine(54) in tRNA + (6R)-5,10-methylene-5,6,7,8-tetrahydrofolate + NADH + H(+) = 5-methyluridine(54) in tRNA + (6S)-5,6,7,8-tetrahydrofolate + NAD(+). The enzyme catalyses uridine(54) in tRNA + (6R)-5,10-methylene-5,6,7,8-tetrahydrofolate + NADPH + H(+) = 5-methyluridine(54) in tRNA + (6S)-5,6,7,8-tetrahydrofolate + NADP(+). Its function is as follows. Catalyzes the folate-dependent formation of 5-methyl-uridine at position 54 (M-5-U54) in all tRNAs. The sequence is that of Methylenetetrahydrofolate--tRNA-(uracil-5-)-methyltransferase TrmFO from Streptococcus pyogenes serotype M2 (strain MGAS10270).